A 402-amino-acid chain; its full sequence is Mediator of RNA polymerase II transcription subunit 27 (402 aa).

Residues M1–S23 are compositionally biased toward polar residues. Residues M1–V30 are disordered. Positions K28 to L49 form a coiled coil.

Belongs to the Mediator complex subunit 27 family. In terms of assembly, component of the Mediator complex.

It localises to the nucleus. In terms of biological role, component of the Mediator complex, a coactivator involved in the regulated transcription of nearly all RNA polymerase II-dependent genes. Mediator functions as a bridge to convey information from gene-specific regulatory proteins to the basal RNA polymerase II transcription machinery. The Mediator complex, having a compact conformation in its free form, is recruited to promoters by direct interactions with regulatory proteins and serves for the assembly of a functional preinitiation complex with RNA polymerase II and the general transcription factors. The chain is Mediator of RNA polymerase II transcription subunit 27 (MED27) from Arabidopsis thaliana (Mouse-ear cress).